The primary structure comprises 289 residues: Putative 2-aminoethylphosphonate transport system permease protein PhnU (289 aa).

6 helical membrane passes run 19-39, 76-96, 111-131, 150-170, 202-222, and 254-274; these read WLLLPLLALATLFFWPLSLIV, FFATAGCLLLGSVMSLILVFI, FIALPTFLITLAFTFIYGSAG, FLYSMQGVILAEITVFTPLVM, VIFPAALPALMASGSLCLLLT, and YTVACMIALINIVLSLGLFSL. The ABC transmembrane type-1 domain maps to 68 to 275; the sequence is LLNTLQIAFF…VLSLGLFSLY (208 aa).

The protein belongs to the binding-protein-dependent transport system permease family.

It is found in the cell inner membrane. Probably part of the PhnSTUV complex (TC 3.A.1.11.5) involved in 2-aminoethylphosphonate import. Probably responsible for the translocation of the substrate across the membrane. This Salmonella typhi protein is Putative 2-aminoethylphosphonate transport system permease protein PhnU (phnU).